The sequence spans 420 residues: Serine/threonine-protein kinase PCRK2 (420 aa).

The segment at 1–64 (MKCFLFPLGD…SNTSMSAREN (64 aa)) is disordered. Residues 22–36 (SPTSNFSDVNKSGSD) are compositionally biased toward polar residues. Low complexity predominate over residues 42-58 (VSGTSTVSSTGRNSNTS). Thr70 carries the phosphothreonine modification. One can recognise a Protein kinase domain in the interval 81–366 (FSRSGMIGEG…EVLEMVTKIV (286 aa)). Residues 87–95 (IGEGGFGCV) and Lys115 contribute to the ATP site. A Phosphotyrosine modification is found at Tyr164. Asp215 acts as the Proton acceptor in catalysis. Ser219 and Ser249 each carry phosphoserine. Phosphothreonine occurs at positions 250 and 255. Phosphotyrosine is present on Tyr263. The disordered stretch occupies residues 369-396 (SSPGNGGKKPQLVPLKSQETSRVEEGKN). Residues 387 to 396 (ETSRVEEGKN) are compositionally biased toward basic and acidic residues.

The protein belongs to the protein kinase superfamily. Ser/Thr protein kinase family. In terms of assembly, interacts with FLS2.

Its subcellular location is the cell membrane. It catalyses the reaction L-seryl-[protein] + ATP = O-phospho-L-seryl-[protein] + ADP + H(+). The enzyme catalyses L-threonyl-[protein] + ATP = O-phospho-L-threonyl-[protein] + ADP + H(+). In terms of biological role, functions redundantly with PCRK1 in basal resistance against bacterial pathogens and in regulation of plant immunity. Functions together with PCRK1 downstream of the pathogen-associated molecular pattern (PAMP) receptor FLS2. Contributes to the induction of SARD1 and CBP60G, which are transcriptional activator of ICS1, an enzyme involved in salicylate (SA) biosynthesis upon pathogen attack. The protein is Serine/threonine-protein kinase PCRK2 of Arabidopsis thaliana (Mouse-ear cress).